We begin with the raw amino-acid sequence, 410 residues long: Mannosyl phosphorylinositol ceramide synthase regulatory protein CSG2 (410 aa).

The first 17 residues, 1–17 (MSTTLLWFSSVIGYVIQ), serve as a signal peptide directing secretion. Over 18–50 (TKCLSNIQSKKEISVGPNGTIATPETNGDNGNS) the chain is Lumenal. N-linked (GlcNAc...) asparagine glycosylation is found at asparagine 35 and asparagine 49. Residues 51–71 (SSLTFYLTFMYFASWLLLVPA) form a helical membrane-spanning segment. Residues 72-141 (SRLWEKMRPM…SVATFKYVAK (70 aa)) lie on the Cytoplasmic side of the membrane. A helical membrane pass occupies residues 142 to 161 (LTVLALIMIVADLTYNMALS). Over 162-167 (LSPAFD) the chain is Lumenal. Residues 168 to 187 (VALMQNTAIFEIVTLLYGVC) form a helical membrane-spanning segment. The Cytoplasmic segment spans residues 188-197 (GISRKNYVFR). Residues 198–217 (NFLIMMNAVIGILIISYTKA) form a helical membrane-spanning segment. Topologically, residues 218-245 (TCDMLAGKLSVNPNTGELSDPFLFDRLK) are lumenal. A helical transmembrane segment spans residues 246–265 (GALICGLGALIMGPFAVLWN). Topologically, residues 266-285 (RWFCSNISKNENSAVVLVKQ) are cytoplasmic. The helical transmembrane segment at 286–305 (STHMALIGIIGMVILLPFIP) threads the bilayer. Residues 306 to 324 (KFPSRESVESISLFYNDKS) lie on the Lumenal side of the membrane. A helical transmembrane segment spans residues 325-344 (FWFSLLGSIIFGSLPSLISI). The Cytoplasmic portion of the chain corresponds to 345 to 355 (LELNRKAPAEY). Residues 356 to 374 (LTTCNLGAIIFMGLAEWVC) form a helical membrane-spanning segment. At 375-385 (EPTQTTIVRWE) the chain is on the lumenal side. A helical transmembrane segment spans residues 386–404 (VIGYIMLTVSLLVLSVTLG). Topologically, residues 405-410 (EGKYHH) are cytoplasmic.

In terms of assembly, heterodimer of CSH1 and CSG2, and SUR1 and CSG2.

It is found in the endoplasmic reticulum membrane. Its function is as follows. Required for calcium regulation. May regulate calcium accumulation by a non-vacuole organelle. Also regulates the activity of CSH1 and SUR1 during mannosyl phosphorylinositol ceramide synthesis. This chain is Mannosyl phosphorylinositol ceramide synthase regulatory protein CSG2 (CSG2), found in Saccharomyces cerevisiae (strain ATCC 204508 / S288c) (Baker's yeast).